Here is a 150-residue protein sequence, read N- to C-terminus: 1,4-dihydroxy-2-naphthoyl-CoA hydrolase (150 aa).

Residue D19 is part of the active site.

It belongs to the 4-hydroxybenzoyl-CoA thioesterase family. DHNA-CoA hydrolase subfamily.

The catalysed reaction is 1,4-dihydroxy-2-naphthoyl-CoA + H2O = 1,4-dihydroxy-2-naphthoate + CoA + H(+). The protein operates within cofactor biosynthesis; phylloquinone biosynthesis. It participates in quinol/quinone metabolism; 1,4-dihydroxy-2-naphthoate biosynthesis; 1,4-dihydroxy-2-naphthoate from chorismate: step 7/7. In terms of biological role, catalyzes the hydrolysis of 1,4-dihydroxy-2-naphthoyl-CoA (DHNA-CoA) to 1,4-dihydroxy-2-naphthoate (DHNA), a reaction involved in phylloquinone (vitamin K1) biosynthesis. The protein is 1,4-dihydroxy-2-naphthoyl-CoA hydrolase of Prochlorococcus marinus (strain MIT 9215).